The chain runs to 1651 residues: Alsin (1651 aa).

RCC1 repeat units follow at residues 59–108 (DGEV…AVTE), 109–167 (SGVV…ALSI), and 169–218 (REIW…ALVQ). Positions 444–476 (REEQVKQESLQGKKSSSLMDIREEESEGGSRRL) are disordered. Residues 450 to 461 (QESLQGKKSSSL) show a composition bias toward polar residues. Serine 459, serine 460, serine 477, and serine 486 each carry phosphoserine. At threonine 504 the chain carries Phosphothreonine. RCC1 repeat units follow at residues 519-570 (RTEV…ALTA) and 572-621 (SQVY…FLVD). Lysine 527 carries the N6-acetyllysine modification. A DH domain is found at 684-879 (GYIASLHELA…ESLALHLGKK (196 aa)). One can recognise a PH domain in the interval 895-1001 (GKMTDSLRKP…RAISQAVDQA (107 aa)). 8 MORN repeats span residues 1043–1065 (YDGR…DGKV), 1066–1088 (YSGT…NKAL), 1094–1116 (YVGH…SGEV), 1117–1139 (FEGC…KLTS), 1145–1167 (FIGQ…TRGE), 1169–1191 (YMGM…FGLY), 1192–1214 (YEGN…DDTI), and 1215–1238 (YEGE…NGDY). At serine 1329 the chain carries Phosphoserine. The 145-residue stretch at 1507–1651 (KQPDIALLGF…YYQIQREKLN (145 aa)) folds into the VPS9 domain.

Forms a heteromeric complex with ALS2CL. Interacts with ALS2CL.

Its function is as follows. May act as a GTPase regulator. Controls survival and growth of spinal motoneurons. The chain is Alsin (Als2) from Rattus norvegicus (Rat).